Here is a 348-residue protein sequence, read N- to C-terminus: Transmembrane protease serine 12 (348 aa).

A signal peptide spans 1-20; sequence MRLGLLSVALLFVGSSHLYS. Over 21–324 the chain is Extracellular; sequence DHYSPSGRHR…EHFFHASTQG (304 aa). Positions 24–46 are disordered; that stretch reads SPSGRHRLGPSPEPAASSQQAEA. The Peptidase S1 domain occupies 78–318; it reads IIGGTEAQAG…YQKWLTEHFF (241 aa). C107 and C123 are disulfide-bonded. Active-site charge relay system residues include H122 and D171. Intrachain disulfides connect C206–C274, C237–C253, and C264–C294. N-linked (GlcNAc...) asparagine glycans are attached at residues N219 and N249. S268 acts as the Charge relay system in catalysis. A helical transmembrane segment spans residues 325–345; that stretch reads ILTINILRGQILIALCFVILL. Residues 346 to 348 are Cytoplasmic-facing; sequence ATT.

This sequence belongs to the peptidase S1 family. In terms of tissue distribution, in testis, expressed in spermatocytes and spermatids (at protein level).

The protein resides in the cell membrane. The protein localises to the cytoplasmic vesicle. It localises to the secretory vesicle. Its subcellular location is the acrosome. Required for male fertility. Plays a critical role in sperm capacitation and acrosome reactions during fertilization, and also plays a role in the regulation of proteins involved in spermatogenesis. Regulates protein pathways that promote chromosomal synapsis formation, double-strand break repair, formation of the inner mitochondrial membrane cristae and apoptosis in developing sperm. Required for normal sperm motility and binding to the zona pellucida, potentially via a role in ADAM3 protein maturation. The sequence is that of Transmembrane protease serine 12 from Homo sapiens (Human).